We begin with the raw amino-acid sequence, 992 residues long: Sorting nexin-19 (992 aa).

The PXA domain occupies 95-272; it reads ERQLEREINR…VLVGIFSKAR (178 aa). Positions 410 to 442 are disordered; it reads ALEPKDGEASEGAEAEEGPGTETETGLPVSTLN. The segment covering 418 to 428 has biased composition (acidic residues); sequence ASEGAEAEEGP. A PX domain is found at 533 to 663; it reads LRITGTITAR…EFLALNTDAR (131 aa). Residues Arg582 and Arg629 each coordinate a 1,2-diacyl-sn-glycero-3-phospho-(1D-myo-inositol-3-phosphate). Disordered stretches follow at residues 692 to 726, 778 to 797, and 973 to 992; these read FPRSEPQSPTEELSEAETESKPQTEGKKASKSRLR, QPTKAPEKDPEQPPKGRVDS, and AATTSASDTPGNSKRMGVSS. 2 stretches are compositionally biased toward basic and acidic residues: residues 709–719 and 782–795; these read TESKPQTEGKK and APEKDPEQPPKGRV. Positions 980 to 992 are enriched in polar residues; it reads DTPGNSKRMGVSS.

It belongs to the sorting nexin family. As to quaternary structure, interacts with PTPRN.

The protein resides in the early endosome membrane. The protein localises to the cytoplasmic vesicle membrane. In terms of biological role, plays a role in intracellular vesicle trafficking and exocytosis. May play a role in maintaining insulin-containing dense core vesicles in pancreatic beta-cells and in preventing their degradation. May play a role in insulin secretion. Interacts with membranes containing phosphatidylinositol 3-phosphate (PtdIns(3P)). The polypeptide is Sorting nexin-19 (SNX19) (Homo sapiens (Human)).